The chain runs to 75 residues: Putative antitoxin PH1062.1 (75 aa).

This sequence belongs to the UPF0330 family.

In terms of biological role, possibly the antitoxin component of a type II toxin-antitoxin (TA) system. The chain is Putative antitoxin PH1062.1 from Pyrococcus horikoshii (strain ATCC 700860 / DSM 12428 / JCM 9974 / NBRC 100139 / OT-3).